Reading from the N-terminus, the 55-residue chain is Bowman-Birk type proteinase inhibitor B1 (55 aa).

4 cysteine pairs are disulfide-bonded: Cys-6–Cys-53, Cys-12–Cys-17, Cys-26–Cys-33, and Cys-30–Cys-45.

Belongs to the Bowman-Birk serine protease inhibitor family. As to expression, expressed in bulb (at protein level).

In terms of biological role, serine protease inhibitor. Weakly inhibits trypsin (Ki = 167 nM). Does not inhibit bacterial subtilisin or mamallian chymotrypsin. This chain is Bowman-Birk type proteinase inhibitor B1, found in Hyacinthus orientalis (Common hyacinth).